A 136-amino-acid polypeptide reads, in one-letter code: MGKDTIADLLTSIRNADMNKKGTVRVVSTNITENIVKILLREGFIESVRKHQESNRYFLVSTLRHQKRKTRKGIYRTRTFLKRISRPGLRIYANYQGIPKVLGGMGIAILSTSRGIMTDREARLNRIGGEVLCYIW.

Belongs to the universal ribosomal protein uS8 family. In terms of assembly, part of the 30S ribosomal subunit.

It localises to the plastid. The protein resides in the chloroplast. Functionally, one of the primary rRNA binding proteins, it binds directly to 16S rRNA central domain where it helps coordinate assembly of the platform of the 30S subunit. The protein is Small ribosomal subunit protein uS8c (rps8) of Oryza sativa subsp. indica (Rice).